The primary structure comprises 154 residues: Transcriptional repressor NrdR (154 aa).

The segment at 3–34 (CPFCGNDETKVLESRQVEEGTAVRRRRECERC) is a zinc-finger region. The region spanning 49–139 (LIVVKKDGRR…VYREFKDVQR (91 aa)) is the ATP-cone domain.

It belongs to the NrdR family. It depends on Zn(2+) as a cofactor.

Negatively regulates transcription of bacterial ribonucleotide reductase nrd genes and operons by binding to NrdR-boxes. This is Transcriptional repressor NrdR from Desulfitobacterium hafniense (strain DSM 10664 / DCB-2).